We begin with the raw amino-acid sequence, 340 residues long: Protein-arginine kinase (340 aa).

The Phosphagen kinase C-terminal domain maps to Val21–Ala242. ATP is bound by residues Ser24 to Arg28, His79, Arg113, Arg164 to Met168, and Arg195 to Glu200.

Belongs to the ATP:guanido phosphotransferase family.

It carries out the reaction L-arginyl-[protein] + ATP = N(omega)-phospho-L-arginyl-[protein] + ADP + H(+). Its function is as follows. Catalyzes the specific phosphorylation of arginine residues in proteins. The sequence is that of Protein-arginine kinase from Listeria monocytogenes serotype 4b (strain CLIP80459).